A 395-amino-acid chain; its full sequence is Flagellin B (395 aa).

It belongs to the bacterial flagellin family.

It localises to the secreted. The protein localises to the bacterial flagellum. Functionally, flagellin is the subunit protein which polymerizes to form the filaments of bacterial flagella. In Rhizobium meliloti (Ensifer meliloti), this protein is Flagellin B (flaB).